The chain runs to 199 residues: MQYPLPIAHLIDAYMKLPGIGEKTATRLAFYTMDMPQEDVEDFSKALIQVKQDIHQCPICGNITEKEICDICSNPNRDQTTIMVVEQPKDLMALEEMGEYDGLYHVLHGVLSPMDGIGPEEVNIKSLITRLQKNDDVKEVILALNSTPEGESTSMYISKLIKPAGIKVTRLAAGLSVGSDIEYANSITLKRAVQGRTTL.

The C4-type zinc-finger motif lies at 57–72 (CPICGNITEKEICDIC). A Toprim domain is found at 80–176 (TTIMVVEQPK…KVTRLAAGLS (97 aa)).

Belongs to the RecR family.

In terms of biological role, may play a role in DNA repair. It seems to be involved in an RecBC-independent recombinational process of DNA repair. It may act with RecF and RecO. The sequence is that of Recombination protein RecR from Lactobacillus acidophilus (strain ATCC 700396 / NCK56 / N2 / NCFM).